The sequence spans 740 residues: Death domain-associated protein 6 (740 aa).

Positions 1-55 are disordered; that stretch reads MATANSIIVLDDDDEDEAAAQPGPSHPLPNAASPGAEAPSSSEPHGARGSSSSGG. Residues 1–160 form a necessary for interaction with USP7 and ATRX region; sequence MATANSIIVL…TSNEPSGNNP (160 aa). Serine 25 carries the phosphoserine modification. Residues 29–55 are compositionally biased toward low complexity; sequence PNAASPGAEAPSSSEPHGARGSSSSGG. Residue lysine 142 forms a Glycyl lysine isopeptide (Lys-Gly) (interchain with G-Cter in SUMO2) linkage. Positions 147 to 185 are disordered; that stretch reads PAATTSNEPSGNNPPTHLSLDPTNAENTASQSPRTRGSR. Residues 149-181 are compositionally biased toward polar residues; the sequence is ATTSNEPSGNNPPTHLSLDPTNAENTASQSPRT. Phosphoserine occurs at positions 178 and 213. 2 coiled-coil regions span residues 180–217 and 358–399; these read RTRG…ELDD and ARRL…ARLQ. The interaction with histone H3.3 stretch occupies residues 183–417; the sequence is GSRRQIQRLE…TPEASLDSGE (235 aa). The segment at 347-570 is necessary for interaction with USP7; that stretch reads GVDPALSDPV…SPVSQLFELE (224 aa). Residues 384–724 form a disordered region; that stretch reads DKSEEGERKK…PRPGTCKTSV (341 aa). The Nuclear localization signal motif lies at 391–395; that stretch reads RKKRR. Residues serine 412 and serine 424 each carry the phosphoserine modification. A coiled-coil region spans residues 430–489; that stretch reads ASRAETDDEDDEESDEEEEEEEEEEEEEATDSEEEEDLEQMQEGQEDDEEEDEEEEAAAG. The segment covering 435–486 has biased composition (acidic residues); the sequence is TDDEDDEESDEEEEEEEEEEEEEATDSEEEEDLEQMQEGQEDDEEEDEEEEA. A Phosphothreonine modification is found at threonine 459. Phosphoserine occurs at positions 495 and 498. Polar residues predominate over residues 496 to 505; that stretch reads PMSSLQISNE. Residues 501 to 625 form an interaction with MAP3K5 region; that stretch reads QISNEKNLEP…GVSPHNWGDS (125 aa). Lysine 512 carries the post-translational modification N6-acetyllysine. Positions 514-524 are enriched in polar residues; sequence ISRSSGEQQNK. Residues 529–542 show a composition bias toward low complexity; the sequence is SPSLLSEEPLAPSS. A compositionally biased stretch (acidic residues) spans 551-561; it reads QPEELTLEEES. 2 positions are modified to phosphoserine: serine 561 and serine 580. Residues 578-590 show a composition bias toward polar residues; it reads TPSSVETDISSSR. The interaction with SPOP stretch occupies residues 626-740; the sequence is GPPCKKSRKE…EEIIVLSDSD (115 aa). 2 (Microbial infection) Interaction with Puumala hantavirus nucleoprotein regions span residues 627 to 634 and 658 to 663; these read PPCKKSRK and KNGKKI. The Nuclear localization signal signature appears at 628–634; it reads PCKKSRK. Residues lysine 630 and lysine 631 each participate in a glycyl lysine isopeptide (Lys-Gly) (interchain with G-Cter in SUMO1) cross-link. Basic and acidic residues predominate over residues 650–660; that stretch reads ERQRSVHEKNG. Serine 668 and serine 671 each carry phosphoserine. Residues 673–683 are compositionally biased toward low complexity; the sequence is LASLAPVADSS. Residues serine 688, serine 702, serine 737, and serine 739 each carry the phosphoserine modification. Positions 693–711 are enriched in polar residues; that stretch reads LVTSSLCIPSPARLSQTPH. Residues 733–740 form a sumo interaction motif (SIM) region; the sequence is IIVLSDSD.

This sequence belongs to the DAXX family. Homomultimer. Interacts (via C-terminus) with TNFRSF6 (via death domain). Interacts with PAX5, SLC2A4/GLUT4, MAP3K5, TGFBR2, phosphorylated dimeric HSPB1/HSP27, CENPC, ETS1, sumoylated PML, UBE2I, MCRS1 and TP53. Interacts (via N-terminus) with HIPK2 and HIPK3. Interacts with HIPK1, which induces translocation from PML/POD/ND10 nuclear bodies to chromatin and enhances association with HDAC1. Interacts (non-phosphorylated) with PAX3, PAX7, DEK, HDAC1, HDAC2, HDAC3, acetylated histone H4 and histones H2A, H2B, H3, H3.3 and H4. Interacts with SPOP; mediating CUL3-dependent proteasomal degradation. Interacts with CBP; the interaction is dependent the sumoylation of CBP and suppresses CBP transcriptional activity via recruitment of HDAC2 directly in the complex with TP53 and HIPK2. Interacts with AXIN1; the interaction stimulates the interaction of DAXX with TP53, stimulates 'Ser-46' phosphorylation of TP53 on and induces cell death on UV irradiation. Interacts with MDM2; the interaction is direct. Interacts with USP7; the interaction is direct and independent of MDM2 and TP53. Part of a complex with DAXX, MDM2 and USP7 under non-stress conditions. Interacts (via N-terminus) with RASSF1 (via C-terminus); the interaction is independent of MDM2 and TP53; RASSF1 isoform A disrupts interactions among MDM2, DAXX and USP7, thus contributing to the efficient activation of TP53 by promoting MDM2 self-ubiquitination in cell-cycle checkpoint control in response to DNA damage. Interacts with ATRX to form the chromatin remodeling complex ATRX:DAXX. Interacts with HSF1 (via homotrimeric form preferentially); this interaction relieves homotrimeric HSF1 from repression of its transcriptional activity by HSP90-dependent multichaperone complex upon heat shock. Interacts with SUMO1P1/SUMO5. As to quaternary structure, (Microbial infection) Interacts with human cytomegalovirus/HHV-5 tegument phosphoprotein pp71 and protein UL123. In terms of assembly, (Microbial infection) Interacts with Epstein-Barr virus protein BNRF1. (Microbial infection) Interacts with human adenovirus 5 E1B-55K protein; this interaction might alterate the normal interactions of DAXX, PML, and TP53, which may contribute to cell transformation. As to quaternary structure, (Microbial infection) Interacts with Puumala hantavirus nucleoprotein. In terms of processing, sumoylated with SUMO1 on multiple lysine residues. Phosphorylated by HIPK1 upon glucose deprivation. Post-translationally, polyubiquitinated; which is promoted by CUL3 and SPOP and results in proteasomal degradation. Ubiquitinated by MDM2; inducing its degradation. Deubiquitinated by USP7; leading to stabilize it. In terms of tissue distribution, ubiquitous.

It localises to the cytoplasm. Its subcellular location is the nucleus. It is found in the nucleoplasm. The protein localises to the PML body. The protein resides in the nucleolus. It localises to the chromosome. Its subcellular location is the centromere. Functionally, transcription corepressor known to repress transcriptional potential of several sumoylated transcription factors. Down-regulates basal and activated transcription. Its transcription repressor activity is modulated by recruiting it to subnuclear compartments like the nucleolus or PML/POD/ND10 nuclear bodies through interactions with MCSR1 and PML, respectively. Seems to regulate transcription in PML/POD/ND10 nuclear bodies together with PML and may influence TNFRSF6-dependent apoptosis thereby. Inhibits transcriptional activation of PAX3 and ETS1 through direct protein-protein interactions. Modulates PAX5 activity; the function seems to involve CREBBP. Acts as an adapter protein in a MDM2-DAXX-USP7 complex by regulating the RING-finger E3 ligase MDM2 ubiquitination activity. Under non-stress condition, in association with the deubiquitinating USP7, prevents MDM2 self-ubiquitination and enhances the intrinsic E3 ligase activity of MDM2 towards TP53, thereby promoting TP53 ubiquitination and subsequent proteasomal degradation. Upon DNA damage, its association with MDM2 and USP7 is disrupted, resulting in increased MDM2 autoubiquitination and consequently, MDM2 degradation, which leads to TP53 stabilization. Acts as a histone chaperone that facilitates deposition of histone H3.3. Acts as a targeting component of the chromatin remodeling complex ATRX:DAXX which has ATP-dependent DNA translocase activity and catalyzes the replication-independent deposition of histone H3.3 in pericentric DNA repeats outside S-phase and telomeres, and the in vitro remodeling of H3.3-containing nucleosomes. Does not affect the ATPase activity of ATRX but alleviates its transcription repression activity. Upon neuronal activation associates with regulatory elements of selected immediate early genes where it promotes deposition of histone H3.3 which may be linked to transcriptional induction of these genes. Required for the recruitment of histone H3.3:H4 dimers to PML-nuclear bodies (PML-NBs); the process is independent of ATRX and facilitated by ASF1A; PML-NBs are suggested to function as regulatory sites for the incorporation of newly synthesized histone H3.3 into chromatin. In case of overexpression of centromeric histone variant CENPA (as found in various tumors) is involved in its mislocalization to chromosomes; the ectopic localization involves a heterotypic tetramer containing CENPA, and histones H3.3 and H4 and decreases binding of CTCF to chromatin. Proposed to mediate activation of the JNK pathway and apoptosis via MAP3K5 in response to signaling from TNFRSF6 and TGFBR2. Interaction with HSPB1/HSP27 may prevent interaction with TNFRSF6 and MAP3K5 and block DAXX-mediated apoptosis. In contrast, in lymphoid cells JNC activation and TNFRSF6-mediated apoptosis may not involve DAXX. Shows restriction activity towards human cytomegalovirus (HCMV). Plays a role as a positive regulator of the heat shock transcription factor HSF1 activity during the stress protein response. This chain is Death domain-associated protein 6 (DAXX), found in Homo sapiens (Human).